We begin with the raw amino-acid sequence, 333 residues long: Flagellar P-ring protein (333 aa).

The N-terminal stretch at Met1–Ala22 is a signal peptide.

The protein belongs to the FlgI family. In terms of assembly, the basal body constitutes a major portion of the flagellar organelle and consists of four rings (L,P,S, and M) mounted on a central rod.

It localises to the periplasm. It is found in the bacterial flagellum basal body. Its function is as follows. Assembles around the rod to form the L-ring and probably protects the motor/basal body from shearing forces during rotation. In Fervidobacterium nodosum (strain ATCC 35602 / DSM 5306 / Rt17-B1), this protein is Flagellar P-ring protein.